Here is a 357-residue protein sequence, read N- to C-terminus: MPFLGQDWRSPGWSWMKTEDGWKRCDAWSQELEGENSQCDIGHGIILNSEDEEIFSNEEHEFASKKRKKDHFRNDTNTQCFYRENWIYVHKESTRERHGYCTLGEAFNRLDFSSAIQDIRRFNYVVRLLQLIAKSQLTSLSGVAQKNYFNILDKIVQKVLGDHQNPRLIKDLLQDLSSTLCILIRGVGKSVLVGNINIWICRLETVLRWQQQLQNLQMTEVDSGLTLSDLPVHMLSNILYRFSDGWDIVTLGQVTPTLSALSEDRQLWKKLCQYHFGEKQFCRHLILSEKGHVEWKLMYFALQKHYPTKEQYGDTLHFCRHCSILFWKDSGHPCTAADPDSCFTPVSPQHFIDLFKY.

Positions 1-83 (MPFLGQDWRS…NDTNTQCFYR (83 aa)) are interaction with beta-actin. In terms of domain architecture, F-box spans 225 to 273 (LTLSDLPVHMLSNILYRFSDGWDIVTLGQVTPTLSALSEDRQLWKKLCQ).

Part of a SCF (SKP1-cullin-F-box) protein ligase complex consisting of FBXO25, SKP1, CUL1 and RBX1. Interacts directly with SKP1 and CUL1. Interacts (via C-terminus) with beta-actin (via N-terminus).

The protein resides in the nucleus. Its pathway is protein modification; protein ubiquitination. Its function is as follows. Substrate-recognition component of the SCF (SKP1-CUL1-F-box protein)-type E3 ubiquitin ligase complex. May play a role in accumulation of expanded polyglutamine (polyQ) protein huntingtin (HTT). The sequence is that of F-box only protein 25 (FBXO25) from Bos taurus (Bovine).